The primary structure comprises 753 residues: Taperin (753 aa).

Residues 141 to 348 (FDSPAAPRRR…IRPSSKPDME (208 aa)) form a disordered region. Positions 182–197 (PAPPVLPSQPAPPISP) are enriched in pro residues. Polar residues-rich tracts occupy residues 230 to 239 (LQKTGSNSFT) and 250 to 263 (VNRSLSNGPMTQES). Phosphoserine is present on Ser274. The span at 300–322 (TPSATPVGPPAFLAPSPASATPS) shows a compositional bias: low complexity. Residues 323–335 (QRQWVSSATSAND) are compositionally biased toward polar residues. A compositionally biased stretch (basic and acidic residues) spans 337–347 (FEIRPSSKPDM). Phosphoserine occurs at positions 402, 458, and 502. A disordered region spans residues 438–488 (GCPRPAISDTDKSVRRQRPASPPPFLPATTEAEPAEGLGVPGLTKNGQEPV). Disordered stretches follow at residues 544–583 (FTVVPKRKPGTLQEPHLSQTNGQFQQGAEEQDADSLSGPH) and 637–676 (FEYPSESSLAQEEAEEEEEEEEEEEGEDGEEEEVGPDSEK). The segment covering 559-571 (HLSQTNGQFQQGA) has biased composition (polar residues). A compositionally biased stretch (acidic residues) spans 648 to 672 (EEAEEEEEEEEEEEGEDGEEEEVGP).

The protein belongs to the taperin family. As to quaternary structure, interacts with GRXCR2; the interaction restricts TPRN to the stereocilum basal region. Interacts with actin ACTB; the interaction may stabilize stereocilia. Interacts with CLIC5. Interacts with PTPRQ. TPRN, CLIC5 and PTPQR form concentric rings at the base of stereocilia and may form a complex. Interacts with phosphatase PPP1CA; the interaction results in inhibition of PPC1A phosphatase activity. Interacts with DNA damage response proteins XRCC6/KU70, XRCC5/KU80, PARP1, TOP1 and TOP2A; these interactions recruit TPRN to sites of DNA damage where it may play a role in DNA repair.

The protein localises to the cell projection. The protein resides in the stereocilium. It localises to the microvillus. It is found in the nucleus. Its subcellular location is the nucleoplasm. The protein localises to the cytoplasm. Functionally, essential for hearing. Required for maintenance of stereocilia on both inner and outer hair cells. Necessary for the integrity of the stereociliary rootlet. May act as an actin cytoskeleton regulator involved in the regulation of actin dynamics at the pointed end in hair cells. Forms rings at the base of stereocilia and binds actin filaments in the stereocilia which may stabilize the stereocilia. Acts as a strong inhibitor of PPP1CA phosphatase activity. Recruited to sites of DNA damage and may play a role in DNA damage repair. The protein is Taperin (Tprn) of Rattus norvegicus (Rat).